We begin with the raw amino-acid sequence, 877 residues long: Clumping factor B (877 aa).

An N-terminal signal peptide occupies residues 1–44 (MKKRIDYLSNKQNKYSIRRFTVGTTSVIVGATILFGIGNHQAQA). The short motif at 15 to 26 (YSIRRFTVGTTS) is the YSIRK-G/S signaling motif element. 2 stretches are compositionally biased toward polar residues: residues 44 to 61 (ASEQSNDTTQSSKNNASA) and 68 to 95 (MIETPQLNTTANDTSDISANTNSANVDS). The disordered stretch occupies residues 44–192 (ASEQSNDTTQ…QGTSKPSVRT (149 aa)). Residues 45-542 (SEQSNDTTQS…GSADGDSAVN (498 aa)) are ligand binding A region. Residues 96-119 (TTKPMSTQTSNTTTTEPASTNETP) show a composition bias toward low complexity. The span at 120–189 (QPTAIKNQAT…SNAQGTSKPS (70 aa)) shows a compositional bias: polar residues. The MIDAS-like motif signature appears at 272 to 276 (DYSNS). The tract at residues 530 to 849 (YGGGSADGDS…ETGDKSENTN (320 aa)) is disordered. Residues 545 to 555 (DPTPGPPVDPE) show a composition bias toward pro residues. The segment covering 556–801 (PSPDPEPEPT…SDSDSDSDSD (246 aa)) has biased composition (acidic residues). The span at 805-816 (RVTPPNNEQKAP) shows a compositional bias: polar residues. A compositionally biased stretch (basic and acidic residues) spans 833–846 (HKTDALPETGDKSE). Residues 838–842 (LPETG) carry the LPXTG sorting signal motif. Threonine 841 is subject to Pentaglycyl murein peptidoglycan amidated threonine. A propeptide spans 842–877 (GDKSENTNATLFGAMMALLGSLLLFRKRKQDHKEKA) (removed by sortase).

Belongs to the serine-aspartate repeat-containing protein (SDr) family. Proteolytically cleaved by aureolysin (aur). This cleavage leads to the inactivation of ClfB.

Its subcellular location is the secreted. It is found in the cell wall. In terms of biological role, cell surface-associated protein implicated in virulence by promoting bacterial attachment to both alpha- and beta-chains of human fibrinogen and inducing the formation of bacterial clumps. Partly responsible for mediating bacterial attachment to the highly keratinized squamous epithelial cells from the nasal cavity via an interaction with cytokeratin K10 (K10). Also promotes bacterial attachment to cultured keratinocytes, possibly through an interaction with cytokeratin K10. Binds mouse cytokeratin K10. Activates human platelet aggregation. The protein is Clumping factor B (clfB) of Staphylococcus aureus (strain NCTC 8325 / PS 47).